Consider the following 486-residue polypeptide: Aspartyl/glutamyl-tRNA(Asn/Gln) amidotransferase subunit B (486 aa).

This sequence belongs to the GatB/GatE family. GatB subfamily. In terms of assembly, heterotrimer of A, B and C subunits.

It catalyses the reaction L-glutamyl-tRNA(Gln) + L-glutamine + ATP + H2O = L-glutaminyl-tRNA(Gln) + L-glutamate + ADP + phosphate + H(+). The catalysed reaction is L-aspartyl-tRNA(Asn) + L-glutamine + ATP + H2O = L-asparaginyl-tRNA(Asn) + L-glutamate + ADP + phosphate + 2 H(+). Its function is as follows. Allows the formation of correctly charged Asn-tRNA(Asn) or Gln-tRNA(Gln) through the transamidation of misacylated Asp-tRNA(Asn) or Glu-tRNA(Gln) in organisms which lack either or both of asparaginyl-tRNA or glutaminyl-tRNA synthetases. The reaction takes place in the presence of glutamine and ATP through an activated phospho-Asp-tRNA(Asn) or phospho-Glu-tRNA(Gln). The polypeptide is Aspartyl/glutamyl-tRNA(Asn/Gln) amidotransferase subunit B (Azoarcus sp. (strain BH72)).